The chain runs to 784 residues: N-alpha-acetyltransferase 35, NatC auxiliary subunit homolog (784 aa).

Disordered regions lie at residues 1-23 (MYPS…VAEP), 320-353 (NTLD…PPAF), and 606-630 (SKTQ…NKKT). The span at 617–630 (KNRKAAKPKKNKKT) shows a compositional bias: basic residues.

This sequence belongs to the MAK10 family. In terms of assembly, component of the N-terminal acetyltransferase C (NatC) complex, which is composed of Naa35, Sbat/Naa38 and Naa30A.

The protein localises to the cytoplasm. Its function is as follows. Auxillary component of the N-terminal acetyltransferase C (NatC) complex which catalyzes acetylation of N-terminal methionine residues. The protein is N-alpha-acetyltransferase 35, NatC auxiliary subunit homolog of Drosophila melanogaster (Fruit fly).